Consider the following 268-residue polypeptide: Sexual development regulator velC (268 aa).

Residues 1–13 show a composition bias toward basic and acidic residues; sequence MPHGFDKLLHPEP. 2 disordered regions span residues 1–124 and 142–165; these read MPHG…DNFS and DPDPNSAPAHPSSISDPHISNPPH. Residues 14–26 are compositionally biased toward pro residues; the sequence is EPQSPSPPPPPRR. Residues 28 to 257 enclose the Velvet domain; that stretch reads STQSRYHLHI…ELGFVELKTR (230 aa). Over residues 92–121 the composition is skewed to basic and acidic residues; that stretch reads DGNRDREREREHERERERERETDGVARTDD.

It belongs to the velvet family. VelC subfamily. In terms of assembly, interacts with velA and vosA.

The protein localises to the nucleus. Velvet-domain-containing protein that acts as a positive regulator of sexual development. This Penicillium rubens (strain ATCC 28089 / DSM 1075 / NRRL 1951 / Wisconsin 54-1255) (Penicillium chrysogenum) protein is Sexual development regulator velC.